The primary structure comprises 358 residues: DNA replication and repair protein RecF (358 aa).

Residue 30–37 (GNNGSGKT) coordinates ATP.

Belongs to the RecF family.

Its subcellular location is the cytoplasm. Its function is as follows. The RecF protein is involved in DNA metabolism; it is required for DNA replication and normal SOS inducibility. RecF binds preferentially to single-stranded, linear DNA. It also seems to bind ATP. The chain is DNA replication and repair protein RecF from Histophilus somni (strain 2336) (Haemophilus somnus).